The chain runs to 303 residues: Acetyl-coenzyme A carboxylase carboxyl transferase subunit beta (303 aa).

Residues 29 to 298 (LWVKCPETGQ…ATPAPASAAA (270 aa)) form the CoA carboxyltransferase N-terminal domain.

Belongs to the AccD/PCCB family. As to quaternary structure, acetyl-CoA carboxylase is a heterohexamer composed of biotin carboxyl carrier protein (AccB), biotin carboxylase (AccC) and two subunits each of ACCase subunit alpha (AccA) and ACCase subunit beta (AccD).

The protein resides in the cytoplasm. It catalyses the reaction N(6)-carboxybiotinyl-L-lysyl-[protein] + acetyl-CoA = N(6)-biotinyl-L-lysyl-[protein] + malonyl-CoA. Its pathway is lipid metabolism; malonyl-CoA biosynthesis; malonyl-CoA from acetyl-CoA: step 1/1. Functionally, component of the acetyl coenzyme A carboxylase (ACC) complex. Biotin carboxylase (BC) catalyzes the carboxylation of biotin on its carrier protein (BCCP) and then the CO(2) group is transferred by the transcarboxylase to acetyl-CoA to form malonyl-CoA. The chain is Acetyl-coenzyme A carboxylase carboxyl transferase subunit beta from Methylobacterium sp. (strain 4-46).